Reading from the N-terminus, the 271-residue chain is Formamidopyrimidine-DNA glycosylase (271 aa).

Catalysis depends on P2, which acts as the Schiff-base intermediate with DNA. E3 functions as the Proton donor in the catalytic mechanism. K58 serves as the catalytic Proton donor; for beta-elimination activity. Positions 92, 111, and 152 each coordinate DNA. The segment at 237 to 271 (MVYGREGQACKHCGRELKHATIGQRATVWCAACQR) adopts an FPG-type zinc-finger fold. R261 (proton donor; for delta-elimination activity) is an active-site residue.

Belongs to the FPG family. In terms of assembly, monomer. The cofactor is Zn(2+).

The enzyme catalyses Hydrolysis of DNA containing ring-opened 7-methylguanine residues, releasing 2,6-diamino-4-hydroxy-5-(N-methyl)formamidopyrimidine.. It carries out the reaction 2'-deoxyribonucleotide-(2'-deoxyribose 5'-phosphate)-2'-deoxyribonucleotide-DNA = a 3'-end 2'-deoxyribonucleotide-(2,3-dehydro-2,3-deoxyribose 5'-phosphate)-DNA + a 5'-end 5'-phospho-2'-deoxyribonucleoside-DNA + H(+). In terms of biological role, involved in base excision repair of DNA damaged by oxidation or by mutagenic agents. Acts as a DNA glycosylase that recognizes and removes damaged bases. Has a preference for oxidized purines, such as 7,8-dihydro-8-oxoguanine (8-oxoG). Has AP (apurinic/apyrimidinic) lyase activity and introduces nicks in the DNA strand. Cleaves the DNA backbone by beta-delta elimination to generate a single-strand break at the site of the removed base with both 3'- and 5'-phosphates. The protein is Formamidopyrimidine-DNA glycosylase of Xanthomonas campestris pv. campestris (strain B100).